Consider the following 282-residue polypeptide: NAD kinase (282 aa).

The active-site Proton acceptor is the D67. NAD(+)-binding positions include D67–G68, N140–E141, H151, R170, D172, and T183–S188.

This sequence belongs to the NAD kinase family. The cofactor is a divalent metal cation.

It is found in the cytoplasm. The catalysed reaction is NAD(+) + ATP = ADP + NADP(+) + H(+). Functionally, involved in the regulation of the intracellular balance of NAD and NADP, and is a key enzyme in the biosynthesis of NADP. Catalyzes specifically the phosphorylation on 2'-hydroxyl of the adenosine moiety of NAD to yield NADP. This chain is NAD kinase, found in Halobacterium salinarum (strain ATCC 700922 / JCM 11081 / NRC-1) (Halobacterium halobium).